Consider the following 1703-residue polypeptide: MAELGQQTVDFSALVGRAAEESFLSFKELVDKSKSTELSDTEKKVSLLKYVAKTQQRMLRLNALAKWCKQVPLINYFQDLGSTLSAHDICFTQAADSLFFMHEGLQQARAPVYDVPSAVEILLTGSYQRLPKCLDDVGMQSSLDEHQQKPALRKLEVLVRSKLLEITLPKEITEVKISKGTVTLSVDGEFKVLVTLGYRGHLSMWRILHLDLLVGERSGPIKLEVTRRHILGDDLERRMSVAENPFTILYAVLHELCVAIVMDTVIRQVRALLQGRWKDAIRFDLISDTGTTPANQEGEADSVSLRTPGMKLFYWSDSDKNSGPFIKIEPGSDLQIKCSHSTFVIDPLTGKEAEFSLDQSCIDVEKLLLKAICCNRYTRLLEIQKELLRNTRICRTPSDVILQALLDEPGIEGDNMVDSKERVEPEVLRVRAYGSSFFTLGINIRTGRFLLQSSKSILTSSILEEFEDALNQGSISAVDAFINLRSKSILHFFAAIGKFLGLEVYEHGFGINKVPKSLLDGSSILTLGFPDCESSHLLLMELEKDFTPLFKLLETQMDGSGKPQSFNDPSNILRAKKIDIGQIRILEDDLNLITSDVVKFVSSFSDAEGINQASGHRQPGLVDEALTEMSGSQLSFSSVVDGVFGLQKVTSALMSIDGHGLVPKNLSAVTGHGKAPMLTSYHSDSLYNRQGPLQSSSYNMLSSPPGKGSAMKKIAISNSDQELSLILSPSLSTGNGVSESGSRLVTESSLSPLPLSQTADLATSSAGPLLRKDQKPRKRSASDLLRLIPSLQVVEGVASPNKRRKTSELVQSELVKSWSPASQTLSTAVSTSTKTIGCSYGNLIAEANKGNAPSSVFVYALLHVVRHSSLSIKHAKLTSQMEALDIQYVEEMGLRDAFSDIWFRLPFAQNDSWQHICLQLGRPGSMCWDVKINDQHFRDLWELQKGSKTTPWGSGVHIANSSDVDSHIRYDPEGVVLSYQSVEADSIKKLVADIQRLSNARMFSLGMRKLLGIKPDEKTEECSANSTMKGSTGGKGSGEPVDRWRAFKIEAVGLTSLWFSFGSGVLARFVVEWESGKDGCTMHVSPDQLWPHTKFLEDFINGAEVESLLDCIRLTAGPLHALAAATRPARASTATGMPVVPATASSRQSNQIQQTQGIIAPSTLAAPNATGQSASATSGNTVASSAPSPLGGGFHGVAMLAAAGRSGPGIVPSSLLPIDVSVVLRGPYWIRIIYRKRFAVDMRCFAGDQVWLQPATPPKGGASIGGSLPCPQFRPFIMEHVAQELNGLEPNLTGSQGATNPNSGNPTVNGVNRVNFSPSSARAAMNRVASVASGSLVVSSGLPVRRTPGTAVPAHVRGELNTAIIGLGDDGGYGGGWVPLVALKKVLRGILKYLGVLWLFAQLPDLLREILGSILKDNEGALLNLDQEQPALRFFVGGYVFAVSVHRVQLLLQVLSVRRFHHQAQQNGSSAAAQEELTQSEIGEICDYFSRRVASEPYDASRVASFITLLTLPISVLREFLKLIAWKKGLSQSQQAGEIAPAQRPRIELCLENHSGTDLDNNCAAKSNIHYDRPHNTVDFALTVVLDPVHIPHINAAGGAAWLPYCVSVRLRYTFGENPSVTFLGMEGSHGGRACWQRVDDWEKCKQRVSRTVEVNGSAAGDLTQGKLKLVADSVQRTLHLCLQGLREGGNNNNNTHQKEFTI.

Polar residues predominate over residues L755 to A766. The interval L755–A781 is disordered.

The protein belongs to the Mediator complex subunit 14 family. In terms of assembly, component of the Mediator complex. Interacts with CDKE-1, HDA19 and LUG. Interacts with PTAC12/HMR/PAP5 and PIF4. Expressed in roots, stems, developing embryos, young leaf primordia, shoot apical meristems, inflorescence meristems, tapetum in anthers, ovules and floral organ primordia, but not in mature organs.

It is found in the nucleus. In terms of biological role, component of the Mediator complex, a coactivator involved in the regulated transcription of nearly all RNA polymerase II-dependent genes. Mediator functions as a bridge to convey information from gene-specific regulatory proteins to the basal RNA polymerase II transcription machinery. The Mediator complex, having a compact conformation in its free form, is recruited to promoters by direct interactions with regulatory proteins and serves for the assembly of a functional pre-initiation complex with RNA polymerase II and the general transcription factors. Binds to G-box (5'-CACGTG-3')-containing regions of target genes promoters (e.g. IAA29 and IAA19). Involved in defining the duration of cell proliferation. Element of a PIF4/HMR/MED14-dependent thermoresponsive process; required for thermomorphogenetic hypocotyl growth in response to daytime warm temperature elicitation by associating to the promoters of thermoresponsive growth-relevant genes (e.g. mainly involved in biosynthesis and signaling of the phytohormone auxin); this also process implies PIF4 and its transcriptional coactivator PTAC12/HMR/PAP5 to promote the expression of target genes. The polypeptide is Mediator of RNA polymerase II transcription subunit 14 (Arabidopsis thaliana (Mouse-ear cress)).